A 1012-amino-acid polypeptide reads, in one-letter code: Cellulose synthase-like protein D5 (1012 aa).

Residues 1–81 (MSVDYANYTV…ARVPAPSSNK (81 aa)) form a disordered region. The span at 20 to 37 (PSGGAPPAAPSAGGARPG) shows a compositional bias: low complexity. Positions 57–69 (GGGDDGAKMDRRL) are enriched in basic and acidic residues. 2 helical membrane passes run 150–170 (ILSP…LFLV) and 180–200 (ALWL…SWLL). The active site involves Asp280. The segment at 597–620 (PRQGSEAMPGAGGGRSGGGSVGGD) is disordered. A compositionally biased stretch (gly residues) spans 606 to 618 (GAGGGRSGGGSVG). Asp717 is an active-site residue. Transmembrane regions (helical) follow at residues 799 to 819 (LFLI…QFIV), 825 to 845 (TFLS…LLEV), 871 to 891 (LAAV…SFTL), 914 to 934 (SLFI…VVGV), 948 to 968 (LLGG…FAKG), and 978 to 998 (TIVY…WITI).

Belongs to the glycosyltransferase 2 family. Plant cellulose synthase-like D subfamily.

It is found in the golgi apparatus membrane. In terms of biological role, thought to be a Golgi-localized beta-glycan synthase that polymerize the backbones of noncellulosic polysaccharides (hemicelluloses) of plant cell wall. The sequence is that of Cellulose synthase-like protein D5 (CSLD5) from Oryza sativa subsp. japonica (Rice).